A 257-amino-acid chain; its full sequence is Proteasome assembly chaperone 1 (257 aa).

The protein belongs to the PSMG1 family. Forms a heterodimer with psmg2.

Chaperone protein which promotes assembly of the 20S proteasome as part of a heterodimer with psmg2. The sequence is that of Proteasome assembly chaperone 1 (psmg1) from Nematostella vectensis (Starlet sea anemone).